A 307-amino-acid chain; its full sequence is Dihydroorotate dehydrogenase B (NAD(+)), catalytic subunit (307 aa).

FMN contacts are provided by residues Ser-22 and 46–47 (KG). Substrate-binding positions include Lys-46 and 70–74 (NAVGL). The FMN site is built by Asn-100 and Asn-128. Asn-128 contacts substrate. Catalysis depends on Cys-131, which acts as the Nucleophile. 2 residues coordinate FMN: Lys-166 and Val-192. Position 193–194 (193–194 (NT)) interacts with substrate. Residues Gly-218 and 244-245 (GG) each bind FMN.

Belongs to the dihydroorotate dehydrogenase family. Type 1 subfamily. In terms of assembly, heterotetramer of 2 PyrK and 2 PyrD type B subunits. FMN serves as cofactor.

Its subcellular location is the cytoplasm. It carries out the reaction (S)-dihydroorotate + NAD(+) = orotate + NADH + H(+). It functions in the pathway pyrimidine metabolism; UMP biosynthesis via de novo pathway; orotate from (S)-dihydroorotate (NAD(+) route): step 1/1. In terms of biological role, catalyzes the conversion of dihydroorotate to orotate with NAD(+) as electron acceptor. This is Dihydroorotate dehydrogenase B (NAD(+)), catalytic subunit (pyrD) from Porphyromonas gingivalis (strain ATCC BAA-308 / W83).